The chain runs to 167 residues: Small ribosomal subunit protein uS5 (167 aa).

Residues 11 to 74 (LQEKLIAVNR…EKARRAMINV (64 aa)) form the S5 DRBM domain.

It belongs to the universal ribosomal protein uS5 family. In terms of assembly, part of the 30S ribosomal subunit. Contacts proteins S4 and S8.

Its function is as follows. With S4 and S12 plays an important role in translational accuracy. In terms of biological role, located at the back of the 30S subunit body where it stabilizes the conformation of the head with respect to the body. The chain is Small ribosomal subunit protein uS5 from Yersinia pseudotuberculosis serotype O:1b (strain IP 31758).